Reading from the N-terminus, the 704-residue chain is Translin-associated factor X-interacting protein 1 (704 aa).

The disordered stretch occupies residues 1–37 (MANLQERKSFSKPRISIQASGGTPEAKGIEKRKLSQK). 2 coiled-coil regions span residues 190 to 230 (EISV…AEEY) and 304 to 342 (RRDL…LQLH).

In terms of assembly, interacts with TSNAX. In terms of tissue distribution, specifically expressed in testes. Predominantly detected in the post-meiotic stages of germ cells.

The protein localises to the cytoplasm. The protein resides in the perinuclear region. Possible role in spermatogenesis. This chain is Translin-associated factor X-interacting protein 1, found in Mus musculus (Mouse).